The chain runs to 282 residues: HTH-type transcriptional activator RhaR (282 aa).

An HTH araC/xylS-type domain is found at 179-277; the sequence is DKLITRLAAS…GMTPSQWRHL (99 aa). DNA-binding regions (H-T-H motif) lie at residues 196-217 and 244-267; these read DKFC…RQQT and ISDI…TRET.

Binds DNA as a dimer.

It localises to the cytoplasm. Its function is as follows. Activates expression of the rhaSR operon in response to L-rhamnose. The sequence is that of HTH-type transcriptional activator RhaR from Escherichia coli (strain K12 / MC4100 / BW2952).